The sequence spans 901 residues: Alanine--tRNA ligase (901 aa).

Residues His-600, His-604, Cys-704, and His-708 each coordinate Zn(2+).

The protein belongs to the class-II aminoacyl-tRNA synthetase family. It depends on Zn(2+) as a cofactor.

The protein resides in the cytoplasm. It catalyses the reaction tRNA(Ala) + L-alanine + ATP = L-alanyl-tRNA(Ala) + AMP + diphosphate. Catalyzes the attachment of alanine to tRNA(Ala) in a two-step reaction: alanine is first activated by ATP to form Ala-AMP and then transferred to the acceptor end of tRNA(Ala). Also edits incorrectly charged Ser-tRNA(Ala) and Gly-tRNA(Ala) via its editing domain. The sequence is that of Alanine--tRNA ligase from Ignicoccus hospitalis (strain KIN4/I / DSM 18386 / JCM 14125).